Consider the following 219-residue polypeptide: ATP phosphoribosyltransferase (219 aa).

This sequence belongs to the ATP phosphoribosyltransferase family. Short subfamily. As to quaternary structure, heteromultimer composed of HisG and HisZ subunits.

The protein localises to the cytoplasm. It carries out the reaction 1-(5-phospho-beta-D-ribosyl)-ATP + diphosphate = 5-phospho-alpha-D-ribose 1-diphosphate + ATP. Its pathway is amino-acid biosynthesis; L-histidine biosynthesis; L-histidine from 5-phospho-alpha-D-ribose 1-diphosphate: step 1/9. Its function is as follows. Catalyzes the condensation of ATP and 5-phosphoribose 1-diphosphate to form N'-(5'-phosphoribosyl)-ATP (PR-ATP). Has a crucial role in the pathway because the rate of histidine biosynthesis seems to be controlled primarily by regulation of HisG enzymatic activity. This chain is ATP phosphoribosyltransferase, found in Syntrophotalea carbinolica (strain DSM 2380 / NBRC 103641 / GraBd1) (Pelobacter carbinolicus).